The following is a 79-amino-acid chain: Cyclotide phyb-A (79 aa).

Positions 1–43 (MVGVNSLRSALYLIVLILFVQLTYFSDARVMDVDLSRAFLPLT) are excised as a propeptide. Positions 44-73 (GIGCGESCVWIPCVSAAIGCSCSNKICYRN) form a cross-link, cyclopeptide (Gly-Asn). 3 cysteine pairs are disulfide-bonded: Cys47–Cys63, Cys51–Cys65, and Cys56–Cys70. A propeptide spanning residues 74 to 79 (GIIPKK) is cleaved from the precursor.

In terms of processing, this is a cyclic peptide. Post-translationally, contains 3 disulfide bonds. Expressed in midvein, lamina and periphery of leaves (at protein level).

Functionally, probably participates in a plant defense mechanism. The chain is Cyclotide phyb-A from Petunia hybrida (Petunia).